The following is a 236-amino-acid chain: Bidirectional sugar transporter SWEET2 (236 aa).

The Extracellular segment spans residues 1-15 (MDVFAFNASLSMCKD). A glycan (N-linked (GlcNAc...) asparagine) is linked at Asn-7. The helical transmembrane segment at 16–36 (VAGIAGNIFAFGLFVSPMPTF) threads the bilayer. The MtN3/slv 1 domain occupies 18–103 (GIAGNIFAFG…ILFIMHTDKK (86 aa)). Over 37 to 50 (RRIMRNKSTEQFSG) the chain is Cytoplasmic. The helical transmembrane segment at 51–71 (LPYIYALLNCLICLWYGTPFI) threads the bilayer. Residues 72–76 (SHSNA) are Extracellular-facing. The chain crosses the membrane as a helical span at residues 77–97 (MLMTVNSVGATFQLCYIILFI). The Cytoplasmic portion of the chain corresponds to 98-108 (MHTDKKNKMKM). The helical transmembrane segment at 109-129 (LGLLFVVFAVVGVIVAGSLQI) threads the bilayer. Residues 130-137 (PDQLTRWY) lie on the Extracellular side of the membrane. A helical membrane pass occupies residues 138–158 (FVGFLSCGSLVSMFASPLFVI). Residues 138–221 (FVGFLSCGSL…LALYCYYHRN (84 aa)) enclose the MtN3/slv 2 domain. Over 159–170 (NLVIRTKSVEFM) the chain is Cytoplasmic. A helical membrane pass occupies residues 171 to 191 (PFYLSLSTFLMSASFLLYGLF). The Extracellular segment spans residues 192-194 (NSD). Residues 195 to 215 (AFVYTPNGIGTILGIVQLALY) form a helical membrane-spanning segment. Topologically, residues 216–236 (CYYHRNSIEEETKEPLIVSYV) are cytoplasmic.

This sequence belongs to the SWEET sugar transporter family. As to quaternary structure, forms heterooligomers with SWEET17.

The protein localises to the cell membrane. Its function is as follows. Mediates both low-affinity uptake and efflux of sugar across the plasma membrane. The sequence is that of Bidirectional sugar transporter SWEET2 from Arabidopsis thaliana (Mouse-ear cress).